A 229-amino-acid polypeptide reads, in one-letter code: Transmembrane emp24 domain-containing protein 5 (229 aa).

The first 27 residues, 1-27 (MGVRMWLPFPMLLLSALPATLLSGAAG), serve as a signal peptide directing secretion. Topologically, residues 28–196 (FTPSLDSDFT…IQESNFDRVN (169 aa)) are lumenal. The 82-residue stretch at 45–126 (KECFYQPMPL…EKVIFFELIL (82 aa)) folds into the GOLD domain. A helical membrane pass occupies residues 197–217 (FWSVVNLMVMVVVSAIQVYTL). At 218 to 229 (KSLFEDKRKSRT) the chain is on the cytoplasmic side.

It belongs to the EMP24/GP25L family. Interacts with TMED9 and TMED10.

It localises to the endoplasmic reticulum membrane. It is found in the golgi apparatus. The protein localises to the cis-Golgi network membrane. The protein resides in the endoplasmic reticulum-Golgi intermediate compartment membrane. In terms of biological role, potential role in vesicular protein trafficking, mainly in the early secretory pathway. Required for the maintenance of the Golgi apparatus; involved in protein exchange between Golgi stacks during assembly. Probably not required for COPI-vesicle-mediated retrograde transport. The polypeptide is Transmembrane emp24 domain-containing protein 5 (Tmed5) (Rattus norvegicus (Rat)).